Here is a 212-residue protein sequence, read N- to C-terminus: ATP phosphoribosyltransferase (212 aa).

This sequence belongs to the ATP phosphoribosyltransferase family. Short subfamily. Heteromultimer composed of HisG and HisZ subunits.

It localises to the cytoplasm. It carries out the reaction 1-(5-phospho-beta-D-ribosyl)-ATP + diphosphate = 5-phospho-alpha-D-ribose 1-diphosphate + ATP. It participates in amino-acid biosynthesis; L-histidine biosynthesis; L-histidine from 5-phospho-alpha-D-ribose 1-diphosphate: step 1/9. Functionally, catalyzes the condensation of ATP and 5-phosphoribose 1-diphosphate to form N'-(5'-phosphoribosyl)-ATP (PR-ATP). Has a crucial role in the pathway because the rate of histidine biosynthesis seems to be controlled primarily by regulation of HisG enzymatic activity. The sequence is that of ATP phosphoribosyltransferase from Clostridium botulinum (strain Langeland / NCTC 10281 / Type F).